Consider the following 144-residue polypeptide: Catabolic 3-dehydroquinase (144 aa).

Residue Tyr-24 is the Proton acceptor of the active site. 3 residues coordinate substrate: Asn-76, His-82, and Asp-89. His-102 acts as the Proton donor in catalysis. Residues 103–104 (IT) and Arg-113 contribute to the substrate site.

Belongs to the type-II 3-dehydroquinase family. In terms of assembly, homododecamer. Adopts a ring-like structure, composed of an arrangement of two hexameric rings stacked on top of one another.

It carries out the reaction 3-dehydroquinate = 3-dehydroshikimate + H2O. It functions in the pathway aromatic compound metabolism; 3,4-dihydroxybenzoate biosynthesis; 3,4-dihydroxybenzoate from 3-dehydroquinate: step 1/2. Its function is as follows. Is involved in the catabolism of quinate. Allows the utilization of quinate as carbon source via the beta-ketoadipate pathway. The sequence is that of Catabolic 3-dehydroquinase from Debaryomyces hansenii (strain ATCC 36239 / CBS 767 / BCRC 21394 / JCM 1990 / NBRC 0083 / IGC 2968) (Yeast).